The primary structure comprises 389 residues: Sterol methyltransferase-like 2 (389 aa).

A helical membrane pass occupies residues 25-45 (LSWKGAVGLVAATGIGYVLII).

The protein belongs to the class I-like SAM-binding methyltransferase superfamily. Erg6/SMT family.

Its subcellular location is the microsome membrane. Unable to convert squalene, botryococcene, cycloartenol, zymosterol or lanosterol to mono-, di-, tri- or tetramethylated derivatives. The sequence is that of Sterol methyltransferase-like 2 (SMT-2) from Botryococcus braunii (Green alga).